Reading from the N-terminus, the 394-residue chain is Protein NDRG1 (394 aa).

Serine 2 carries the N-acetylserine modification. A phosphoserine mark is found at serine 2, serine 319, and serine 326. Residues 325 to 394 (RSRTASGSSV…AGPKSMEVSC (70 aa)) form a disordered region. The segment covering 327-339 (RTASGSSVTSLEG) has biased composition (polar residues). Threonine 328 is modified (phosphothreonine). At serine 330 the chain carries Phosphoserine; by SGK1. A phosphoserine mark is found at serine 332 and serine 333. Position 335 is a phosphothreonine (threonine 335). At serine 336 the chain carries Phosphoserine. A run of 3 repeats spans residues 339–348 (GTRSRSHTSE), 349–358 (GPRSRSHTSE), and 359–368 (GSRSRSHTSE). The 3 X 10 AA tandem repeats of G-[PST]-R-S-R-S-H-T-S-E stretch occupies residues 339 to 368 (GTRSRSHTSEGPRSRSHTSEGSRSRSHTSE). Threonine 340 carries the phosphothreonine modification. Serine 342 bears the Phosphoserine mark. The span at 345–371 (HTSEGPRSRSHTSEGSRSRSHTSEDAR) shows a compositional bias: basic and acidic residues. A Phosphothreonine; by SGK1 modification is found at threonine 346. Serine 352 bears the Phosphoserine mark. Residue threonine 356 is modified to Phosphothreonine; by SGK1. Serine 362 and serine 364 each carry phosphoserine. Threonine 366 is modified (phosphothreonine; by SGK1). Residues 374–386 (ITPNSGATGNNAG) are compositionally biased toward polar residues. Threonine 375 is subject to Phosphothreonine.

Belongs to the NDRG family. In terms of assembly, interacts with RAB4A (membrane-bound form); the interaction involves NDRG1 in vesicular recycling of CDH1. Interacts with APOA1, APOA2, PRA1 and RTN1. Post-translationally, under stress conditions, phosphorylated in the C-terminal on many serine and threonine residues. Phosphorylated in vitro by PKA. Phosphorylation enhanced by increased intracellular cAMP levels. Homocysteine induces dephosphorylation. Phosphorylation by SGK1 is cell cycle dependent. In terms of tissue distribution, widely expressed, with highest levels in kidney followed by brain, pancreas, small intestine, colon and spleen (at protein level). Also detected in heart and preputial gland, and in much smaller quantities in other tissues. Not detected in duodenum and prostate. Highly expressed in Schwann cells.

It is found in the cytoplasm. It localises to the cytosol. Its subcellular location is the cytoskeleton. The protein localises to the microtubule organizing center. The protein resides in the centrosome. It is found in the nucleus. It localises to the cell membrane. Stress-responsive protein involved in hormone responses, cell growth, and differentiation. Acts as a tumor suppressor in many cell types. Necessary but not sufficient for p53/TP53-mediated caspase activation and apoptosis. Required for vesicular recycling of CDH1 and TF. May also function in lipid trafficking. Protects cells from spindle disruption damage. Functions in p53/TP53-dependent mitotic spindle checkpoint. Regulates microtubule dynamics and maintains euploidy. Has a role in cell trafficking notably of the Schwann cell and is necessary for the maintenance and development of the peripheral nerve myelin sheath. The chain is Protein NDRG1 (Ndrg1) from Mus musculus (Mouse).